Consider the following 314-residue polypeptide: Probable cell division protein WhiA (314 aa).

Residues 277–311 (TLKELGEKMPSGAISKSGINHRLRKLNQLAEGYQQ) constitute a DNA-binding region (H-T-H motif).

This sequence belongs to the WhiA family.

In terms of biological role, involved in cell division and chromosome segregation. The polypeptide is Probable cell division protein WhiA (Latilactobacillus sakei subsp. sakei (strain 23K) (Lactobacillus sakei subsp. sakei)).